We begin with the raw amino-acid sequence, 371 residues long: 4-hydroxy-3-methylbut-2-en-1-yl diphosphate synthase (flavodoxin) (371 aa).

[4Fe-4S] cluster contacts are provided by Cys270, Cys273, Cys305, and Glu312.

The protein belongs to the IspG family. It depends on [4Fe-4S] cluster as a cofactor.

It catalyses the reaction (2E)-4-hydroxy-3-methylbut-2-enyl diphosphate + oxidized [flavodoxin] + H2O + 2 H(+) = 2-C-methyl-D-erythritol 2,4-cyclic diphosphate + reduced [flavodoxin]. It functions in the pathway isoprenoid biosynthesis; isopentenyl diphosphate biosynthesis via DXP pathway; isopentenyl diphosphate from 1-deoxy-D-xylulose 5-phosphate: step 5/6. Its function is as follows. Converts 2C-methyl-D-erythritol 2,4-cyclodiphosphate (ME-2,4cPP) into 1-hydroxy-2-methyl-2-(E)-butenyl 4-diphosphate. This is 4-hydroxy-3-methylbut-2-en-1-yl diphosphate synthase (flavodoxin) from Shewanella pealeana (strain ATCC 700345 / ANG-SQ1).